A 168-amino-acid chain; its full sequence is Endoribonuclease YbeY (168 aa).

3 residues coordinate Zn(2+): H122, H126, and H132.

The protein belongs to the endoribonuclease YbeY family. The cofactor is Zn(2+).

Its subcellular location is the cytoplasm. Its function is as follows. Single strand-specific metallo-endoribonuclease involved in late-stage 70S ribosome quality control and in maturation of the 3' terminus of the 16S rRNA. In Brucella abortus (strain 2308), this protein is Endoribonuclease YbeY.